A 415-amino-acid polypeptide reads, in one-letter code: G patch domain-containing protein 4 (415 aa).

Met-1 carries the post-translational modification N-acetylmethionine. Phosphothreonine is present on Thr-4. The 47-residue stretch at 11–57 folds into the G-patch domain; it reads GMKFAEEQLLKHGWTQGKGLGRRENGITQALKVTLKQDNHGVGHDPA. Lys-46 is covalently cross-linked (Glycyl lysine isopeptide (Lys-Gly) (interchain with G-Cter in SUMO2)). Thr-116 carries the phosphothreonine modification. Disordered regions lie at residues 116 to 141 and 191 to 415; these read TSGEEKPDRDLGNCSDVDNHEPTPPK and LGTS…VDLS. A compositionally biased stretch (basic and acidic residues) spans 118–141; sequence GEEKPDRDLGNCSDVDNHEPTPPK. Ser-130 bears the Phosphoserine mark. The segment covering 191-201 has biased composition (polar residues); that stretch reads LGTSQPLTDSE. A compositionally biased stretch (basic and acidic residues) spans 224-239; that stretch reads SLGDELLGHTDRSFRD. Ser-258 carries the post-translational modification Phosphoserine. The segment covering 335 to 345 has biased composition (acidic residues); it reads EDLDTQEEEGK. Over residues 353-364 the composition is skewed to basic residues; that stretch reads RKVRRKDKRKRQ. Positions 387–397 are enriched in basic and acidic residues; it reads AGERSRQYPKE. Basic residues predominate over residues 398-407; sequence RAKKKKRKRD.

The chain is G patch domain-containing protein 4 (Gpatch4) from Mus musculus (Mouse).